The sequence spans 240 residues: Chloroplastic group IIB intron splicing facilitator CRS2-B, chloroplastic (240 aa).

The protein belongs to the PTH family. CRS2 subfamily. In terms of assembly, part of large ribonucleo-protein complexes that include group IIB introns and either CAF1 or CAF2.

The protein localises to the plastid. It is found in the chloroplast stroma. Its function is as follows. Required for the splicing of group IIB introns in chloroplasts. The polypeptide is Chloroplastic group IIB intron splicing facilitator CRS2-B, chloroplastic (CRS2B) (Arabidopsis thaliana (Mouse-ear cress)).